A 214-amino-acid polypeptide reads, in one-letter code: Adenylate kinase (214 aa).

10-15 (GAGKGT) lines the ATP pocket. The segment at 30-59 (STGDMLRAAVKAQSELGRQAKALMDAGKLV) is NMP. Residues Thr31, Arg36, 57 to 59 (KLV), 85 to 88 (GFPR), and Gln92 each bind AMP. An LID region spans residues 122-159 (GRRVHAPSGRVYHVKFNPPKQEGKDDVTGELLTSRKDD). Residues Arg123 and 132 to 133 (VY) each bind ATP. 2 residues coordinate AMP: Arg156 and Arg167. Arg200 lines the ATP pocket.

It belongs to the adenylate kinase family. As to quaternary structure, monomer.

It localises to the cytoplasm. The enzyme catalyses AMP + ATP = 2 ADP. It functions in the pathway purine metabolism; AMP biosynthesis via salvage pathway; AMP from ADP: step 1/1. Functionally, catalyzes the reversible transfer of the terminal phosphate group between ATP and AMP. Plays an important role in cellular energy homeostasis and in adenine nucleotide metabolism. The polypeptide is Adenylate kinase (Sodalis glossinidius (strain morsitans)).